A 104-amino-acid chain; its full sequence is Large ribosomal subunit protein bL21 (104 aa).

Belongs to the bacterial ribosomal protein bL21 family. As to quaternary structure, part of the 50S ribosomal subunit. Contacts protein L20.

Functionally, this protein binds to 23S rRNA in the presence of protein L20. This Streptococcus gordonii (strain Challis / ATCC 35105 / BCRC 15272 / CH1 / DL1 / V288) protein is Large ribosomal subunit protein bL21.